Reading from the N-terminus, the 349-residue chain is Protein-glutamate methylesterase/protein-glutamine glutaminase 3 (349 aa).

The 118-residue stretch at 2-119 (DVLIVDDSPV…HPDFERDVES (118 aa)) folds into the Response regulatory domain. Asp-52 is modified (4-aspartylphosphate). Residues 157 to 340 (EGFQPGVIAI…LSPPRIAALL (184 aa)) form the CheB-type methylesterase domain. Active-site residues include Ser-169, His-196, and Asp-289.

It belongs to the CheB family. Post-translationally, phosphorylated by CheA. Phosphorylation of the N-terminal regulatory domain activates the methylesterase activity.

The protein resides in the cytoplasm. It catalyses the reaction [protein]-L-glutamate 5-O-methyl ester + H2O = L-glutamyl-[protein] + methanol + H(+). It carries out the reaction L-glutaminyl-[protein] + H2O = L-glutamyl-[protein] + NH4(+). In terms of biological role, involved in chemotaxis. Part of a chemotaxis signal transduction system that modulates chemotaxis in response to various stimuli. Catalyzes the demethylation of specific methylglutamate residues introduced into the chemoreceptors (methyl-accepting chemotaxis proteins or MCP) by CheR. Also mediates the irreversible deamidation of specific glutamine residues to glutamic acid. The chain is Protein-glutamate methylesterase/protein-glutamine glutaminase 3 from Hahella chejuensis (strain KCTC 2396).